A 394-amino-acid chain; its full sequence is Guanine nucleotide-binding protein G(s) subunit alpha (394 aa).

Residues 1–25 (MGCLGDSKTEDQRNEEKAQREANKK) form a disordered region. Residue Gly2 is the site of N-palmitoyl glycine attachment. A lipid anchor (S-palmitoyl cysteine) is attached at Cys3. Residues 7–25 (SKTEDQRNEEKAQREANKK) show a composition bias toward basic and acidic residues. In terms of domain architecture, G-alpha spans 39-394 (ATHRLLLLGA…RMHLRQYELL (356 aa)). A G1 motif region spans residues 42 to 55 (RLLLLGAGESGKST). 47–55 (GAGESGKST) is a GTP binding site. Residue Ser54 participates in Mg(2+) binding. Residues 68 to 90 (FNGEGGEEDPQAARSNSDGEKAT) are disordered. A G2 motif region spans residues 196–204 (DLLRCRVLT). GTP contacts are provided by residues 197–204 (LLRCRVLT), 223–227 (DVGGQ), 292–295 (NKQD), and Ala366. Position 204 (Thr204) interacts with Mg(2+). The G3 motif stretch occupies residues 219-228 (FHMFDVGGQR). Positions 288–295 (ILFLNKQD) are G4 motif. The interval 364 to 369 (TCAVDT) is G5 motif.

It belongs to the G-alpha family. G(s) subfamily. As to quaternary structure, heterotrimeric G proteins are composed of 3 units; alpha, beta and gamma. The alpha chain contains the guanine nucleotide binding site. Interacts with CRY1; the interaction may block GPCR-mediated regulation of cAMP concentrations. Interacts with ADCY6 and stimulates its adenylyl cyclase activity. Interacts with ADCY2 and ADCY5. Stimulates the ADCY5 adenylyl cyclase activity. Interaction with SASH1.

Its subcellular location is the cell membrane. In terms of biological role, guanine nucleotide-binding proteins (G proteins) function as transducers in numerous signaling pathways controlled by G protein-coupled receptors (GPCRs). Signaling involves the activation of adenylyl cyclases, resulting in increased levels of the signaling molecule cAMP. GNAS functions downstream of several GPCRs, including beta-adrenergic receptors. Stimulates the Ras signaling pathway via RAPGEF2. This Cricetulus longicaudatus (Long-tailed dwarf hamster) protein is Guanine nucleotide-binding protein G(s) subunit alpha (GNAS).